Reading from the N-terminus, the 394-residue chain is Elongation factor Tu (394 aa).

Residues 10–204 (LPHVNIGTIG…AVDEYIPTPT (195 aa)) enclose the tr-type G domain. The segment at 19–26 (GHVDHGKT) is G1. Residue 19-26 (GHVDHGKT) coordinates GTP. Residue Thr26 participates in Mg(2+) binding. Residues 60 to 64 (GITIN) form a G2 region. Residues 81–84 (DCPG) are G3. GTP-binding positions include 81–85 (DCPGH) and 136–139 (NKCD). The G4 stretch occupies residues 136-139 (NKCD). The interval 174–176 (SAL) is G5.

This sequence belongs to the TRAFAC class translation factor GTPase superfamily. Classic translation factor GTPase family. EF-Tu/EF-1A subfamily. In terms of assembly, monomer.

Its subcellular location is the cytoplasm. It carries out the reaction GTP + H2O = GDP + phosphate + H(+). Its function is as follows. GTP hydrolase that promotes the GTP-dependent binding of aminoacyl-tRNA to the A-site of ribosomes during protein biosynthesis. The chain is Elongation factor Tu from Mesoplasma florum (strain ATCC 33453 / NBRC 100688 / NCTC 11704 / L1) (Acholeplasma florum).